Reading from the N-terminus, the 555-residue chain is MDVSSEHTKDPGGEGGDGESLAARPSKIKASSGPPTSPEPGELESEPEEEEEEQAASQGGTAADEQAEAPKGLTAAEAAGEEGPGEPGRPAEPQPEPEEPAEVGAEEPAQPEPGAGPEELEAEAGAEELEQAAEGKEVRFQASLPLTRIDEEEAAAAPEAETERVEGEEEDKEETQRDGAESKERDGEGRPAKSQEEGKRLYGRDEFEDLEWSEEVQKLQEQQLRSDLLDQYRSLLVERNRSQRYNLYLQHKIFEALRRKKGLEAAEVADRGAEAEAPEKEQAYLRHLGMLEELKKQQADDLQWYHQELGQLKRQCQEKLTRVEKEWRRFQALKKQVVMQAMGSCRMRGGRQAALREVEQIQALEDKKEKEMSAVRLENIQLKQSLVHFETRMRTQEDLTQGLLLIDFEQLKIENQTFNEKIEERNEELLKLRSKVTNSVQVITHVKEKLHFMDMENACKKTQLAEIEAQAALGRDILTKTKQAREGLRTDNIRLNQKCGLLGKDSLLRDLEEKVDKTELLHRRLESLKRHHASLTLSCRGVRQKIREAKAFLPS.

Basic and acidic residues predominate over residues 1–12 (MDVSSEHTKDPG). The disordered stretch occupies residues 1-202 (MDVSSEHTKD…KSQEEGKRLY (202 aa)). 2 stretches are compositionally biased toward acidic residues: residues 41 to 54 (GELESEPEEEEEEQ) and 95 to 105 (PEPEEPAEVGA). Low complexity predominate over residues 106-117 (EEPAQPEPGAGP). Positions 118–131 (EELEAEAGAEELEQ) are enriched in acidic residues. Residues 174–202 (ETQRDGAESKERDGEGRPAKSQEEGKRLY) show a composition bias toward basic and acidic residues. Coiled coils occupy residues 305 to 441 (YHQE…NSVQ) and 505 to 531 (DSLLRDLEEKVDKTELLHRRLESLKRH).

Belongs to the CFAP184 family. Forms a complex with CFAP263; the interaction is required for functional activity in cilia.

It localises to the cell projection. The protein resides in the cilium. It is found in the cytoplasm. The protein localises to the cytoskeleton. Its subcellular location is the microtubule organizing center. It localises to the centrosome. Its function is as follows. In complex with CFAP263, acts as a regulator of ciliary beating that connects radial spoke 3 (RS3) to the inner dynein arm (IDA) and the nexin-dynein regulatory complex (N-DRC). The complex is positioned parallel to N-DRC and forms a connection between the arch at the base of RS3, the IDA tail and N-DRC. The protein is Cilia- and flagella-associated protein 184 of Homo sapiens (Human).